A 527-amino-acid chain; its full sequence is GMP synthase [glutamine-hydrolyzing] (527 aa).

The Glutamine amidotransferase type-1 domain maps to 19 to 212 (KIIVLDYGSQ…AFSICGAKGD (194 aa)). The Nucleophile role is filled by Cys-96. Catalysis depends on residues His-186 and Glu-188. One can recognise a GMPS ATP-PPase domain in the interval 213-402 (WSMANFVDMQ…LGMPDEVVWR (190 aa)). 240-246 (SGGVDSS) provides a ligand contact to ATP.

As to quaternary structure, homodimer.

The catalysed reaction is XMP + L-glutamine + ATP + H2O = GMP + L-glutamate + AMP + diphosphate + 2 H(+). It participates in purine metabolism; GMP biosynthesis; GMP from XMP (L-Gln route): step 1/1. Its function is as follows. Catalyzes the synthesis of GMP from XMP. This chain is GMP synthase [glutamine-hydrolyzing], found in Streptococcus thermophilus (strain CNRZ 1066).